Here is a 110-residue protein sequence, read N- to C-terminus: MPFFSSCLCPSHYSGPSLPSSTSSSLPTGPENQLGFVLLQAMVHHANSSCVRNAFWLQITEKLTPALSIIISVVYLRCPEMVENRIGFLLNVKDSKTLSVVGPHPKPCIL.

Expressed predominantly in brain and weakly in heart and lung. Expression is reduced or undetectable in cultured glioma cells, primary glioblastoma cells and malignant glioblastoma tumors.

May serve as a molecular marker for or play a role in the malignant progression of glioblastomas. The chain is Putative protein RIG (RIG) from Homo sapiens (Human).